A 218-amino-acid chain; its full sequence is MQFVAHDNFHTLEVRKVRYLHSRQVTFLLAGLLLNIEQFVKAIKERNNEFKIDIFLRSLLYQLPLHLGDHVHDDVRKSLLVPEPELCAWFSLQTGYAPASTSGRVNLYVPGTKTSRRRIIQRSLASNFSEKFKRFPECLFVGFEHFQRFLSIWTRDAERRLFSGCREIPVGSHTLVELANLGELLRVMVASEQFHNSRLLSRLAVHCYKIYGEDGFIS.

The region spanning 63-67 (LPLHL) is the F-box-like domain.

Belongs to the polerovirus P0 protein family. As to quaternary structure, interacts (via F-box-like domain) with host AGO1; this interaction targets AGO1 for degradation, and thereby suppresses the silencing function of the latter. Interacts (via F-box-like domain) with host ASK1 and ASK2 (SKP proteins); these interactions are essential for viral pathogenicity. Part of a SCF P0 complex composed of P0 and the host proteins SKP and CUL1.

Suppressor of RNA-mediated gene silencing, also known as post-transcriptional gene silencing (PTGS), a mechanism of plant viral defense that limits the accumulation of viral RNAs. The P0 protein suppresses local PTGS using its F-box-like domain to mediate destabilization and degradation of the AGO1 protein. This Beet western yellows virus (isolate GB1) (BWYV) protein is Suppressor of silencing P0.